Reading from the N-terminus, the 399-residue chain is 3-methyl-2-oxobutanoate hydroxymethyltransferase 2, mitochondrial (399 aa).

Residues 1-90 (MSFSRLLTPR…ARRVTLATLR (90 aa)) constitute a mitochondrion transit peptide. Residues D125 and D164 each contribute to the Mg(2+) site. 3-methyl-2-oxobutanoate is bound by residues 125–126 (DS), D164, and K194. Mg(2+) is bound at residue E196. Residue E264 is the Proton acceptor of the active site.

It belongs to the PanB family. Mg(2+) serves as cofactor.

The protein resides in the mitochondrion. The enzyme catalyses 3-methyl-2-oxobutanoate + (6R)-5,10-methylene-5,6,7,8-tetrahydrofolate + H2O = 2-dehydropantoate + (6S)-5,6,7,8-tetrahydrofolate. The protein operates within cofactor biosynthesis; (R)-pantothenate biosynthesis; (R)-pantoate from 3-methyl-2-oxobutanoate: step 1/2. Catalyzes the reversible reaction in which hydroxymethyl group from 5,10-methylenetetrahydrofolate is transferred onto alpha-ketoisovalerate to form ketopantoate. This chain is 3-methyl-2-oxobutanoate hydroxymethyltransferase 2, mitochondrial (KPHMT2), found in Oryza sativa subsp. japonica (Rice).